The following is a 79-amino-acid chain: Sec-independent protein translocase protein TatA (79 aa).

The chain crosses the membrane as a helical span at residues methionine 1 to glycine 21. Residues methionine 43–aspartate 60 show a composition bias toward basic and acidic residues. The segment at methionine 43 to valine 79 is disordered.

Belongs to the TatA/E family. As to quaternary structure, the Tat system comprises two distinct complexes: a TatABC complex, containing multiple copies of TatA, TatB and TatC subunits, and a separate TatA complex, containing only TatA subunits. Substrates initially bind to the TatABC complex, which probably triggers association of the separate TatA complex to form the active translocon.

It is found in the cell inner membrane. Functionally, part of the twin-arginine translocation (Tat) system that transports large folded proteins containing a characteristic twin-arginine motif in their signal peptide across membranes. TatA could form the protein-conducting channel of the Tat system. The chain is Sec-independent protein translocase protein TatA from Nitrobacter hamburgensis (strain DSM 10229 / NCIMB 13809 / X14).